The chain runs to 148 residues: Lipoprotein signal peptidase (148 aa).

A run of 2 helical transmembrane segments spans residues 57 to 77 (VLLV…FIKY) and 88 to 105 (VSFI…RIFY). Catalysis depends on residues Asp-110 and Asp-129. Residues 124–144 (TFNIADILVVVGTIMLAIFLL) form a helical membrane-spanning segment.

Belongs to the peptidase A8 family.

The protein localises to the cell membrane. It carries out the reaction Release of signal peptides from bacterial membrane prolipoproteins. Hydrolyzes -Xaa-Yaa-Zaa-|-(S,diacylglyceryl)Cys-, in which Xaa is hydrophobic (preferably Leu), and Yaa (Ala or Ser) and Zaa (Gly or Ala) have small, neutral side chains.. It participates in protein modification; lipoprotein biosynthesis (signal peptide cleavage). In terms of biological role, this protein specifically catalyzes the removal of signal peptides from prolipoproteins. This chain is Lipoprotein signal peptidase, found in Clostridium novyi (strain NT).